An 86-amino-acid chain; its full sequence is Small ribosomal subunit protein bS16 (86 aa).

It belongs to the bacterial ribosomal protein bS16 family.

The polypeptide is Small ribosomal subunit protein bS16 (Acidithiobacillus ferrooxidans (strain ATCC 23270 / DSM 14882 / CIP 104768 / NCIMB 8455) (Ferrobacillus ferrooxidans (strain ATCC 23270))).